Here is a 310-residue protein sequence, read N- to C-terminus: Glutaminase 1 (310 aa).

Substrate is bound by residues serine 66, asparagine 117, glutamate 161, asparagine 168, tyrosine 192, tyrosine 244, and valine 262. Lysine 294 bears the N6-acetyllysine mark.

It belongs to the glutaminase family. In terms of assembly, homotetramer.

It carries out the reaction L-glutamine + H2O = L-glutamate + NH4(+). The polypeptide is Glutaminase 1 (Shigella flexneri).